The chain runs to 279 residues: Movement protein (279 aa).

Belongs to the cucumovirus movement protein family.

The protein resides in the host cell junction. It localises to the host plasmodesma. Functionally, transports viral genome to neighboring plant cells directly through plasmosdesmata, without any budding. The movement protein allows efficient cell to cell propagation, by bypassing the host cell wall barrier. Acts by forming a tubular structure at the host plasmodesmata, enlarging it enough to allow free passage of virion capsids. The sequence is that of Movement protein from Cucumber mosaic virus (strain As) (CMV).